The chain runs to 444 residues: C4-dicarboxylate transport protein (444 aa).

A run of 9 helical transmembrane segments spans residues 15 to 35 (VIVA…FGVA), 46 to 66 (LIKM…IAGM), 78 to 98 (YALL…LIVV), 143 to 163 (IVGA…VIFG), 199 to 219 (PIGA…GSLV), 224 to 244 (LMIC…GGIA), 291 to 311 (VVGL…AIYL), 332 to 352 (ITLL…TGSG), and 354 to 374 (IVLA…LALI). The interval 422-444 (GIADTRPEDDLGVAEGPTPSNVK) is disordered.

It belongs to the dicarboxylate/amino acid:cation symporter (DAACS) (TC 2.A.23) family.

It localises to the cell inner membrane. Its function is as follows. Responsible for the transport of dicarboxylates such as succinate, fumarate, and malate from the periplasm across the membrane. The protein is C4-dicarboxylate transport protein of Pseudomonas fluorescens (strain Pf0-1).